The sequence spans 328 residues: Ethanol acetyltransferase 1 (328 aa).

An AB hydrolase-1 domain is found at 39–309; the sequence is PAIINIHGLL…TGHNLLLENP (271 aa). Active-site charge relay system residues include S115, D139, and H302.

The protein belongs to the AB hydrolase superfamily.

The protein localises to the mitochondrion. The enzyme catalyses ethanol + acetyl-CoA = ethyl acetate + CoA. The catalysed reaction is acetyl-CoA + H2O = acetate + CoA + H(+). It carries out the reaction ethyl acetate + H2O = ethanol + acetate + H(+). In terms of biological role, alcohol acetyltransferase that catalyzes the synthesis of ethyl acetate from ethanol and acetyl-CoA. Can also function as a thioesterase by hydrolyzing acetyl-CoA in the absence of ethanol, as well as esterase hydrolyzing ethyl acetate. The polypeptide is Ethanol acetyltransferase 1 (Saccharomyces cerevisiae (strain ATCC 204508 / S288c) (Baker's yeast)).